The sequence spans 185 residues: Large ribosomal subunit protein uL22 (185 aa).

The disordered stretch occupies residues 157–185 (VAAPTPDEDAPKKKQSKKKMARQKLMQRD). Positions 169–178 (KKQSKKKMAR) are enriched in basic residues.

The protein belongs to the universal ribosomal protein uL22 family.

The chain is Large ribosomal subunit protein uL22 (RpL17) from Argas monolakensis (Mono lake bird tick).